A 122-amino-acid chain; its full sequence is Secretion system apparatus protein SsaM (122 aa).

The chain is Secretion system apparatus protein SsaM (ssaM) from Salmonella typhimurium (strain LT2 / SGSC1412 / ATCC 700720).